The following is a 1416-amino-acid chain: Uveal autoantigen with coiled-coil domains and ankyrin repeats (1416 aa).

N-acetylmethionine is present on Met1. The interval 1 to 24 is disordered; it reads MKSLKSRLRRQDVPGPASSGAAAA. 6 ANK repeats span residues 38-66, 67-96, 100-129, 133-162, 166-195, and 199-228; these read LMKAAERGDVEKVTSILAKKGVNPGKLDV, EGRSVFHVVTSKGNLECLNAILIHGVDITT, AGRNALHLAAKYGHALCLQKLLQYNCPTEH, QGRTALHDAAMADCPSSIQLLCDHGASVNA, DGRTPLVLATQMSRPTICQLLIDRGADVNS, and QNRTALMLGCEYGCRDAVEVLIKNGADISL. 2 coiled-coil regions span residues 286–374 and 438–1386; these read VKSH…NRFK and ENEI…IYRT. Lys1035 is covalently cross-linked (Glycyl lysine isopeptide (Lys-Gly) (interchain with G-Cter in SUMO2)).

Component of the apoptosome complex, composed of APAF1, pro-caspase-9 and UACA. In the complex, it probably interacts directly with APAF1. Interacts with LGALS3, ARF6 and ACTB. Interacts with RAB39A. In terms of tissue distribution, highly expressed in skeletal muscle, heart, kidney and pancreas. Expressed in choroid, retina and epidermal melanocytes. Expressed in eye muscles and thyroid follicular cells.

The protein localises to the nucleus. The protein resides in the cytoplasm. It localises to the cytoskeleton. In terms of biological role, regulates APAF1 expression and plays an important role in the regulation of stress-induced apoptosis. Promotes apoptosis by regulating three pathways, apoptosome up-regulation, LGALS3/galectin-3 down-regulation and NF-kappa-B inactivation. Regulates the redistribution of APAF1 into the nucleus after proapoptotic stress. Down-regulates the expression of LGALS3 by inhibiting NFKB1. Functionally, modulates isoactin dynamics to regulate the morphological alterations required for cell growth and motility. Interaction with ARF6 may modulate cell shape and motility after injury. May be involved in multiple neurite formation. This Homo sapiens (Human) protein is Uveal autoantigen with coiled-coil domains and ankyrin repeats (UACA).